The chain runs to 386 residues: Inactive GDSL esterase/lipase-like protein 23 (386 aa).

A signal peptide spans 1-29 (MMAKNCNLVSVLCVFLVLTLFNKPITVAG). Ser43 acts as the Nucleophile in catalysis. Residues Asn105, Asn165, and Asn288 are each glycosylated (N-linked (GlcNAc...) asparagine). Catalysis depends on residues Asp322 and His325.

The protein belongs to the 'GDSL' lipolytic enzyme family. As to quaternary structure, part of the PYK10 complex. Interacts with MVP1. Expressed mainly in roots.

The protein localises to the endoplasmic reticulum. Functionally, involved in the control of the PYK10 complex size and possibly substrate specificity. May be exported from the endoplasmic reticulum upon interaction with MVP1. This Arabidopsis thaliana (Mouse-ear cress) protein is Inactive GDSL esterase/lipase-like protein 23 (GLL23).